The chain runs to 358 residues: Probable anti-sigma-M factor YhdL (358 aa).

A helical transmembrane segment spans residues 74–96 (ISVLAVISTLMILPLCTLGSYLY).

As to quaternary structure, the N-terminus of YhdL interacts with sigma-M. YhdL interacts specifically with YhdK.

It localises to the membrane. This chain is Probable anti-sigma-M factor YhdL (yhdL), found in Bacillus subtilis (strain 168).